Here is a 199-residue protein sequence, read N- to C-terminus: Small ribosomal subunit protein uS4 (199 aa).

In terms of domain architecture, S4 RNA-binding spans 91 to 151 (SRLDNLVYRF…EKSKNVKAIA (61 aa)).

Belongs to the universal ribosomal protein uS4 family. Part of the 30S ribosomal subunit. Contacts protein S5. The interaction surface between S4 and S5 is involved in control of translational fidelity.

Its function is as follows. One of the primary rRNA binding proteins, it binds directly to 16S rRNA where it nucleates assembly of the body of the 30S subunit. In terms of biological role, with S5 and S12 plays an important role in translational accuracy. The chain is Small ribosomal subunit protein uS4 from Exiguobacterium sp. (strain ATCC BAA-1283 / AT1b).